A 404-amino-acid polypeptide reads, in one-letter code: MEHVPNEHGRFGDFGGKFVPETLMLPLEEIETELDKALADESFRQEYIRILQHYSGRPTPLTFAPNLTRQLGGAKIYLKREDLNHTGAHKINNAIGQALLAKRMGKKKLIAETGAGQHGVAAATVAAHFGMECIVFMGEEDMKRQELNVFRMKLLGAEVVPVLSGNRTLKDATNEAIRYWVAHCDDHFYMIGSVVGPHPYPKMVREFQRVIGDEAKEQFLAGEGTLPDVIVACVGGGSNAIGMFYPFLQDDVRLVGVEAAGKGIDTPHHAATIAKGTKGVIHGAMTYLLQDEYGQIIEPYSISAGLDYPGVGPEHAYLASIGRVRYESVTDEEAVAAFQLLAQTEGIIPAIESAHAVAKAVELARQMTPDETVLICLSGRGDKDVQMMMHHLGVKEGEDVASAR.

The residue at position 90 (Lys90) is an N6-(pyridoxal phosphate)lysine.

Belongs to the TrpB family. Tetramer of two alpha and two beta chains. Requires pyridoxal 5'-phosphate as cofactor.

It carries out the reaction (1S,2R)-1-C-(indol-3-yl)glycerol 3-phosphate + L-serine = D-glyceraldehyde 3-phosphate + L-tryptophan + H2O. Its pathway is amino-acid biosynthesis; L-tryptophan biosynthesis; L-tryptophan from chorismate: step 5/5. Functionally, the beta subunit is responsible for the synthesis of L-tryptophan from indole and L-serine. This Geobacillus thermodenitrificans (strain NG80-2) protein is Tryptophan synthase beta chain.